Here is a 599-residue protein sequence, read N- to C-terminus: Cytadherence high molecular weight protein 3 (599 aa).

Polar residues predominate over residues 220–236 (VQVDSGSQNHSFNNSPS). A disordered region spans residues 220-241 (VQVDSGSQNHSFNNSPSLKPPL).

It is found in the cell projection. Its subcellular location is the attachment organelle membrane. In terms of biological role, component of the cytoskeleton-like structure which stabilizes the shape of the wall-less mycoplasma. This cytoskeleton-like network of accessory proteins containing HMW proteins 1 to 5 allows the proper anchoring of cytadhesin proteins in the mycoplasmal membrane at the attachment organelle. Essential for successful surface parasitism. This chain is Cytadherence high molecular weight protein 3 (hmw3), found in Mycoplasma genitalium (strain ATCC 33530 / DSM 19775 / NCTC 10195 / G37) (Mycoplasmoides genitalium).